A 304-amino-acid polypeptide reads, in one-letter code: Ornithine carbamoyltransferase (304 aa).

Carbamoyl phosphate contacts are provided by residues 53-56 (STRT), Q80, R104, and 131-134 (HPCQ). L-ornithine contacts are provided by residues N162, D219, and 223–224 (SM). Residues 259 to 260 (CL) and R287 contribute to the carbamoyl phosphate site.

The protein belongs to the aspartate/ornithine carbamoyltransferase superfamily. OTCase family.

Its subcellular location is the cytoplasm. The enzyme catalyses carbamoyl phosphate + L-ornithine = L-citrulline + phosphate + H(+). It functions in the pathway amino-acid biosynthesis; L-arginine biosynthesis; L-arginine from L-ornithine and carbamoyl phosphate: step 1/3. Functionally, reversibly catalyzes the transfer of the carbamoyl group from carbamoyl phosphate (CP) to the N(epsilon) atom of ornithine (ORN) to produce L-citrulline. The protein is Ornithine carbamoyltransferase of Nitrosococcus oceani (strain ATCC 19707 / BCRC 17464 / JCM 30415 / NCIMB 11848 / C-107).